Here is a 332-residue protein sequence, read N- to C-terminus: Glycerol-3-phosphate dehydrogenase [NAD(P)+] (332 aa).

3 residues coordinate NADPH: W11, R30, and K108. 3 residues coordinate sn-glycerol 3-phosphate: K108, G137, and S139. A141 contributes to the NADPH binding site. Residues K192, D245, S255, R256, and N257 each contribute to the sn-glycerol 3-phosphate site. Residue K192 is the Proton acceptor of the active site. R256 contacts NADPH. The NADPH site is built by V280 and E282.

Belongs to the NAD-dependent glycerol-3-phosphate dehydrogenase family.

The protein localises to the cytoplasm. It catalyses the reaction sn-glycerol 3-phosphate + NAD(+) = dihydroxyacetone phosphate + NADH + H(+). The enzyme catalyses sn-glycerol 3-phosphate + NADP(+) = dihydroxyacetone phosphate + NADPH + H(+). It participates in membrane lipid metabolism; glycerophospholipid metabolism. Catalyzes the reduction of the glycolytic intermediate dihydroxyacetone phosphate (DHAP) to sn-glycerol 3-phosphate (G3P), the key precursor for phospholipid synthesis. This Burkholderia cenocepacia (strain ATCC BAA-245 / DSM 16553 / LMG 16656 / NCTC 13227 / J2315 / CF5610) (Burkholderia cepacia (strain J2315)) protein is Glycerol-3-phosphate dehydrogenase [NAD(P)+].